The primary structure comprises 390 residues: Formate-dependent phosphoribosylglycinamide formyltransferase (390 aa).

N(1)-(5-phospho-beta-D-ribosyl)glycinamide contacts are provided by residues 14–15 and Glu-74; that span reads EL. Residues Arg-106, Lys-147, 152–157, 187–190, and Glu-195 each bind ATP; these read SSGKGQ and EQFI. The 194-residue stretch at 111-304 folds into the ATP-grasp domain; that stretch reads DLAAQELGIT…EFDLHARAIM (194 aa). Positions 263 and 275 each coordinate Mg(2+). N(1)-(5-phospho-beta-D-ribosyl)glycinamide is bound by residues Asp-282, Lys-351, and 358 to 359; that span reads RR.

This sequence belongs to the PurK/PurT family. In terms of assembly, homodimer.

It carries out the reaction N(1)-(5-phospho-beta-D-ribosyl)glycinamide + formate + ATP = N(2)-formyl-N(1)-(5-phospho-beta-D-ribosyl)glycinamide + ADP + phosphate + H(+). Its pathway is purine metabolism; IMP biosynthesis via de novo pathway; N(2)-formyl-N(1)-(5-phospho-D-ribosyl)glycinamide from N(1)-(5-phospho-D-ribosyl)glycinamide (formate route): step 1/1. Its function is as follows. Involved in the de novo purine biosynthesis. Catalyzes the transfer of formate to 5-phospho-ribosyl-glycinamide (GAR), producing 5-phospho-ribosyl-N-formylglycinamide (FGAR). Formate is provided by PurU via hydrolysis of 10-formyl-tetrahydrofolate. This is Formate-dependent phosphoribosylglycinamide formyltransferase from Erythrobacter litoralis (strain HTCC2594).